We begin with the raw amino-acid sequence, 579 residues long: Type IV pilus assembly ATPase PilB (579 aa).

340–345 contributes to the ATP binding site; the sequence is GSGKTV. The Zn(2+) site is built by cysteine 470, cysteine 473, cysteine 507, and cysteine 510.

Belongs to the GSP E family. As to quaternary structure, interacts with CpiA.

Its subcellular location is the cytoplasm. With respect to regulation, inhibited by the inhibitory protein CpiA. In terms of biological role, ATPase component of the type IV pilus (T4P). Acts as a molecular motor to provide the energy that is required for biogenesis of the pilus and the extrusion of substrates generated in the cytoplasm. PilB is required for optimal T4P extension and, consequently, efficient natural transformation. May promote processive T4P extension. The protein is Type IV pilus assembly ATPase PilB of Acinetobacter baylyi (strain ATCC 33305 / BD413 / ADP1).